A 210-amino-acid chain; its full sequence is Thymidylate kinase (210 aa).

An ATP-binding site is contributed by 10–17 (GLEGAGKS).

Belongs to the thymidylate kinase family.

It catalyses the reaction dTMP + ATP = dTDP + ADP. Its function is as follows. Phosphorylation of dTMP to form dTDP in both de novo and salvage pathways of dTTP synthesis. This Haemophilus influenzae (strain PittEE) protein is Thymidylate kinase.